A 273-amino-acid polypeptide reads, in one-letter code: 4-hydroxy-tetrahydrodipicolinate reductase (273 aa).

Residues 12–17 and E38 contribute to the NAD(+) site; that span reads GAGGRM. An NADP(+)-binding site is contributed by R39. Residues 102–104 and 126–129 each bind NAD(+); these read GTT and AANF. The active-site Proton donor/acceptor is H159. Residue H160 coordinates (S)-2,3,4,5-tetrahydrodipicolinate. K163 serves as the catalytic Proton donor. Residue 169–170 coordinates (S)-2,3,4,5-tetrahydrodipicolinate; that stretch reads GT.

The protein belongs to the DapB family. Homotetramer.

The protein resides in the cytoplasm. The enzyme catalyses (S)-2,3,4,5-tetrahydrodipicolinate + NAD(+) + H2O = (2S,4S)-4-hydroxy-2,3,4,5-tetrahydrodipicolinate + NADH + H(+). It carries out the reaction (S)-2,3,4,5-tetrahydrodipicolinate + NADP(+) + H2O = (2S,4S)-4-hydroxy-2,3,4,5-tetrahydrodipicolinate + NADPH + H(+). It functions in the pathway amino-acid biosynthesis; L-lysine biosynthesis via DAP pathway; (S)-tetrahydrodipicolinate from L-aspartate: step 4/4. Functionally, catalyzes the conversion of 4-hydroxy-tetrahydrodipicolinate (HTPA) to tetrahydrodipicolinate. This Pectobacterium atrosepticum (strain SCRI 1043 / ATCC BAA-672) (Erwinia carotovora subsp. atroseptica) protein is 4-hydroxy-tetrahydrodipicolinate reductase.